Here is a 445-residue protein sequence, read N- to C-terminus: C4-dicarboxylate transport protein (445 aa).

Helical transmembrane passes span 24 to 44, 62 to 82, 105 to 125, 163 to 183, 201 to 221, 234 to 254, 322 to 342, and 370 to 390; these read VLYVQVLFAIVVGVLVGWLSP, LIKMVIAPIIFCTVVSGIAHI, FALVLGLIVGNLFPVGHGLAA, GDILQVLLFAVLFGFALMALG, FGVIAIVMKAAPIGAFGAMAF, LIGLVALFYATSALFVVLVLG, IYMTLATLFIAQALGIELSFG, and AGTLAAVNPALVPGMAIVFSI.

This sequence belongs to the dicarboxylate/amino acid:cation symporter (DAACS) (TC 2.A.23) family.

The protein localises to the cell inner membrane. Functionally, responsible for the transport of dicarboxylates such as succinate, fumarate, and malate from the periplasm across the membrane. The polypeptide is C4-dicarboxylate transport protein (Rhodopseudomonas palustris (strain ATCC BAA-98 / CGA009)).